A 190-amino-acid chain; its full sequence is Cancer-related nucleoside-triphosphatase homolog (190 aa).

ATP contacts are provided by residues 9 to 16 (GPPGVGKT) and 109 to 116 (VCIIDEIG). K165 is modified (N6-acetyllysine).

Belongs to the THEP1 NTPase family. As to quaternary structure, monomer.

It catalyses the reaction a ribonucleoside 5'-triphosphate + H2O = a ribonucleoside 5'-diphosphate + phosphate + H(+). The catalysed reaction is 5-methyl-UTP + H2O = 5-methyl-UDP + phosphate + H(+). It carries out the reaction CTP + H2O = CDP + phosphate + H(+). The enzyme catalyses ATP + H2O = ADP + phosphate + H(+). It catalyses the reaction GTP + H2O = GDP + phosphate + H(+). Has nucleotide phosphatase activity towards ATP, GTP, CTP, TTP and UTP. Hydrolyzes nucleoside diphosphates with lower efficiency. This is Cancer-related nucleoside-triphosphatase homolog from Mus musculus (Mouse).